Consider the following 88-residue polypeptide: Small ribosomal subunit protein uS15 (88 aa).

Belongs to the universal ribosomal protein uS15 family. In terms of assembly, part of the 30S ribosomal subunit. Forms a bridge to the 50S subunit in the 70S ribosome, contacting the 23S rRNA.

In terms of biological role, one of the primary rRNA binding proteins, it binds directly to 16S rRNA where it helps nucleate assembly of the platform of the 30S subunit by binding and bridging several RNA helices of the 16S rRNA. Its function is as follows. Forms an intersubunit bridge (bridge B4) with the 23S rRNA of the 50S subunit in the ribosome. This Acidobacterium capsulatum (strain ATCC 51196 / DSM 11244 / BCRC 80197 / JCM 7670 / NBRC 15755 / NCIMB 13165 / 161) protein is Small ribosomal subunit protein uS15.